An 871-amino-acid chain; its full sequence is Protein arg-6, mitochondrial (871 aa).

The N-terminal 44 residues, 1–44, are a transit peptide targeting the mitochondrion; it reads MYSACAVALRAGARRVVRRVPKSARALPRAAAARRQISTTAARS. The N-acetyltransferase domain maps to 336 to 488; sequence QASTSLSEFK…DFTENGRAML (153 aa). Residue Cys-689 is part of the active site.

In the N-terminal section; belongs to the acetylglutamate kinase family. This sequence in the C-terminal section; belongs to the NAGSA dehydrogenase family. The protein precursor is cleaved into the two biologically active enzymes, the kinase and the reductase.

It is found in the mitochondrion. The catalysed reaction is N-acetyl-L-glutamate 5-semialdehyde + phosphate + NADP(+) = N-acetyl-L-glutamyl 5-phosphate + NADPH + H(+). The enzyme catalyses N-acetyl-L-glutamate + ATP = N-acetyl-L-glutamyl 5-phosphate + ADP. Its pathway is amino-acid biosynthesis; L-arginine biosynthesis; N(2)-acetyl-L-ornithine from L-glutamate: step 2/4. It participates in amino-acid biosynthesis; L-arginine biosynthesis; N(2)-acetyl-L-ornithine from L-glutamate: step 3/4. The chain is Protein arg-6, mitochondrial (arg-6) from Neurospora crassa (strain ATCC 24698 / 74-OR23-1A / CBS 708.71 / DSM 1257 / FGSC 987).